The following is a 341-amino-acid chain: Methionine import ATP-binding protein MetN 2 (341 aa).

An ABC transporter domain is found at 2-241 (IQFKNISKHY…PQHPTTKTFI (240 aa)). 38-45 (GYSGAGKS) serves as a coordination point for ATP.

This sequence belongs to the ABC transporter superfamily. Methionine importer (TC 3.A.1.24) family. As to quaternary structure, the complex is composed of two ATP-binding proteins (MetN), two transmembrane proteins (MetI) and a solute-binding protein (MetQ).

The protein localises to the cell inner membrane. It catalyses the reaction L-methionine(out) + ATP + H2O = L-methionine(in) + ADP + phosphate + H(+). The catalysed reaction is D-methionine(out) + ATP + H2O = D-methionine(in) + ADP + phosphate + H(+). Functionally, part of the ABC transporter complex MetNIQ involved in methionine import. Responsible for energy coupling to the transport system. In Acinetobacter baylyi (strain ATCC 33305 / BD413 / ADP1), this protein is Methionine import ATP-binding protein MetN 2.